A 346-amino-acid chain; its full sequence is MEKITLTRPDDWHLHLRDGEALKAVLPDTVRQFARAIVMPNLKPPVRTVAEAAAYHDRILAAIPPGRTFEPLMTLYLTDNTSPAEIQAAKESGFVKAVKYYPAGATTNSDLGVTDIRKCDAVFEAMQTVDLPLLLHGEVTDHRVDVFDREKVFIETYLRPLKERFPQLRIVLEHITTKDAVEFVLASDEKVAATITPQHLLFNRNSIFQGGIRPHFYCLPILKRETHREALLEAATSGNPKFFLGTDSAPHGRDRKESDCGCAGCYSALHALELYATVFEAADALDKLEGFASFYGPDFYQLPRNTEKITLTKTPWQIPDALPFPESSLVPLWAGQELSWKFAPVA.

Zn(2+) is bound by residues His-13 and His-15. Substrate contacts are provided by residues 15–17 and Asn-41; that span reads HLR. The Zn(2+) site is built by Lys-99, His-136, and His-174. N6-carboxylysine is present on Lys-99. Residue His-136 participates in substrate binding. Leu-219 is a binding site for substrate. Asp-247 is a Zn(2+) binding site. Asp-247 is an active-site residue. The substrate site is built by His-251 and Ala-263.

Belongs to the metallo-dependent hydrolases superfamily. DHOase family. Class II DHOase subfamily. Homodimer. It depends on Zn(2+) as a cofactor.

It catalyses the reaction (S)-dihydroorotate + H2O = N-carbamoyl-L-aspartate + H(+). The protein operates within pyrimidine metabolism; UMP biosynthesis via de novo pathway; (S)-dihydroorotate from bicarbonate: step 3/3. In terms of biological role, catalyzes the reversible cyclization of carbamoyl aspartate to dihydroorotate. The polypeptide is Dihydroorotase (Picosynechococcus sp. (strain ATCC 27264 / PCC 7002 / PR-6) (Agmenellum quadruplicatum)).